We begin with the raw amino-acid sequence, 447 residues long: Cobyrinate a,c-diamide synthase (447 aa).

The GATase cobBQ-type domain maps to 247 to 435 (RIGVAIDEAF…IHIHAASCPQ (189 aa)). C329 acts as the Nucleophile in catalysis.

The protein belongs to the CobB/CbiA family. It depends on Mg(2+) as a cofactor.

It carries out the reaction cob(II)yrinate + 2 L-glutamine + 2 ATP + 2 H2O = cob(II)yrinate a,c diamide + 2 L-glutamate + 2 ADP + 2 phosphate + 2 H(+). The enzyme catalyses Ni-sirohydrochlorin + 2 L-glutamine + 2 ATP + 2 H2O = Ni-sirohydrochlorin a,c-diamide + 2 L-glutamate + 2 ADP + 2 phosphate + 2 H(+). It functions in the pathway cofactor biosynthesis; adenosylcobalamin biosynthesis; cob(II)yrinate a,c-diamide from sirohydrochlorin (anaerobic route): step 10/10. Its function is as follows. Catalyzes the ATP-dependent amidation of the two carboxylate groups at positions a and c of cobyrinate, using either L-glutamine or ammonia as the nitrogen source. Involved in the biosynthesis of the unique nickel-containing tetrapyrrole coenzyme F430, the prosthetic group of methyl-coenzyme M reductase (MCR), which plays a key role in methanogenesis and anaerobic methane oxidation. Catalyzes the ATP-dependent amidation of the two carboxylate groups at positions a and c of Ni-sirohydrochlorin, using L-glutamine or ammonia as the nitrogen source. This Methanothermobacter thermautotrophicus (strain ATCC 29096 / DSM 1053 / JCM 10044 / NBRC 100330 / Delta H) (Methanobacterium thermoautotrophicum) protein is Cobyrinate a,c-diamide synthase.